The chain runs to 184 residues: Putative manganese efflux pump MntP (184 aa).

5 helical membrane-spanning segments follow: residues 39–59 (IFGVFQALMPFLGYILGLSFV), 65–85 (IDHFIAFGILGFLGAKMILEA), 102–122 (LALGAVATSIDALAVGITFSF), 132–152 (LIIGTVCFVLCTAACYVGKIL), and 161–181 (LVLGGLILIGLGTKILITHLV).

The protein belongs to the MntP (TC 9.B.29) family.

Its subcellular location is the cell inner membrane. Probably functions as a manganese efflux pump. The protein is Putative manganese efflux pump MntP of Campylobacter curvus (strain 525.92).